We begin with the raw amino-acid sequence, 137 residues long: Peptide methionine sulfoxide reductase MsrB (137 aa).

The region spanning 7-129 (AEELKKNLSE…NSASLRFTDG (123 aa)) is the MsrB domain. Zn(2+) contacts are provided by Cys46, Cys49, Cys95, and Cys98. Cys118 (nucleophile) is an active-site residue.

This sequence belongs to the MsrB Met sulfoxide reductase family. Zn(2+) is required as a cofactor.

The enzyme catalyses L-methionyl-[protein] + [thioredoxin]-disulfide + H2O = L-methionyl-(R)-S-oxide-[protein] + [thioredoxin]-dithiol. In Escherichia coli O8 (strain IAI1), this protein is Peptide methionine sulfoxide reductase MsrB.